A 98-amino-acid chain; its full sequence is N(2)-fixation sustaining protein CowN (98 aa).

It belongs to the CowN family.

Functionally, is required to sustain N(2)-dependent growth in the presence of low levels of carbon monoxide (CO). Probably acts by protecting the N(2) fixation ability of the nitrogenase complex, which is inactivated in the presence of CO. This Azospirillum sp. (strain B510) protein is N(2)-fixation sustaining protein CowN.